The primary structure comprises 454 residues: UDP-N-acetylmuramoylalanine--D-glutamate ligase (454 aa).

115 to 121 contacts ATP; sequence GTNGKTT.

This sequence belongs to the MurCDEF family.

It is found in the cytoplasm. The enzyme catalyses UDP-N-acetyl-alpha-D-muramoyl-L-alanine + D-glutamate + ATP = UDP-N-acetyl-alpha-D-muramoyl-L-alanyl-D-glutamate + ADP + phosphate + H(+). Its pathway is cell wall biogenesis; peptidoglycan biosynthesis. Cell wall formation. Catalyzes the addition of glutamate to the nucleotide precursor UDP-N-acetylmuramoyl-L-alanine (UMA). This Thermoanaerobacter sp. (strain X514) protein is UDP-N-acetylmuramoylalanine--D-glutamate ligase.